Here is a 356-residue protein sequence, read N- to C-terminus: S-adenosylmethionine:tRNA ribosyltransferase-isomerase (356 aa).

Belongs to the QueA family. As to quaternary structure, monomer.

It localises to the cytoplasm. The catalysed reaction is 7-aminomethyl-7-carbaguanosine(34) in tRNA + S-adenosyl-L-methionine = epoxyqueuosine(34) in tRNA + adenine + L-methionine + 2 H(+). It participates in tRNA modification; tRNA-queuosine biosynthesis. Transfers and isomerizes the ribose moiety from AdoMet to the 7-aminomethyl group of 7-deazaguanine (preQ1-tRNA) to give epoxyqueuosine (oQ-tRNA). This chain is S-adenosylmethionine:tRNA ribosyltransferase-isomerase, found in Escherichia coli O127:H6 (strain E2348/69 / EPEC).